A 94-amino-acid polypeptide reads, in one-letter code: Lipolysis-activating peptide 1-beta chain (94 aa).

The first 19 residues, 1–19, serve as a signal peptide directing secretion; that stretch reads MKILAVVLISVIVLNTANG. The LCN-type CS-alpha/beta domain occupies 20–87; that stretch reads ENYYPQKYTN…FFNALESQCP (68 aa). 3 disulfide bridges follow: Cys34/Cys56, Cys42/Cys66, and Cys46/Cys68.

This sequence belongs to the long (3 C-C) scorpion toxin superfamily. In terms of assembly, homodimer; disulfide-linked or monomer (edited version) or heterodimer of an alpha chain (AC D9U299 or AC D9U2A4) and this beta chain (non-edited version). In terms of tissue distribution, expressed by the venom gland.

It localises to the secreted. The homodimer inhibits HMG-CoA reductase (HMGCR) (32% of inhibition produced by 0.6 uM), a glycoprotein involved in the control of cholesterol biosynthesis. The inhibitory effects of bumarsin are seen at much lower concentrations (0.6 uM) than that for statins such as atorvastatin (5 mM) and simvastatin (10 uM). In addition to inhibition of HMG-CoA reductase, this protein lowers cholesterol levels by inducing steroid hormone synthesis via StAR, and by increasing reverse cholesterol transport mediated by the induction of ABCA1 and APOA1. In terms of biological role, the heterodimer non-edited LVP1 induces lipolysis in rat adipocytes. Induction of lipolysis by LVP1 appears to be mediated through the beta-2 adrenergic receptor pathway (ADRB2). Its function is as follows. The monomer edited version, similar to alpha-toxins, may modulate voltage-gated sodium channels (Nav) and may block voltage-gated potassium channels (Kv). This is Lipolysis-activating peptide 1-beta chain from Lychas mucronatus (Chinese swimming scorpion).